Consider the following 751-residue polypeptide: uncharacterized protein (751 aa).

The segment at 73-169 (FGVVHSHTPK…PVLIDDDTGE (97 aa)) is disordered. Over residues 96–109 (ATSTRRSATAQRAA) the composition is skewed to low complexity. Over residues 111-120 (LKSSPVDQWS) the composition is skewed to polar residues.

This is an uncharacterized protein from Invertebrate iridescent virus 3 (IIV-3).